A 319-amino-acid chain; its full sequence is Dehydrogenase/reductase SDR family member 9 (319 aa).

The signal sequence occupies residues 1–20 (MLLWVLALLFLCAFLWNYKG). Residues 34–58 (ITGCDSGFGNLAARTFDRKGFRVIA) and aspartate 83 each bind NAD(+). Serine 164 is a substrate binding site. Tyrosine 176 functions as the Proton acceptor in the catalytic mechanism. Lysine 180 is a binding site for NAD(+).

Belongs to the short-chain dehydrogenases/reductases (SDR) family. As to quaternary structure, homotetramer. As to expression, highly expressed in epithelium of estrus uterus.

The protein localises to the microsome membrane. It is found in the endoplasmic reticulum membrane. The enzyme catalyses 3beta-hydroxy-5alpha-pregnane-20-one + NAD(+) = 5alpha-pregnane-3,20-dione + NADH + H(+). It catalyses the reaction 17beta-hydroxy-5alpha-androstan-3-one + NAD(+) = 5alpha-androstan-3,17-dione + NADH + H(+). It carries out the reaction androsterone + NAD(+) = 5alpha-androstan-3,17-dione + NADH + H(+). The catalysed reaction is 5alpha-androstane-3alpha,17beta-diol + NAD(+) = 17beta-hydroxy-5alpha-androstan-3-one + NADH + H(+). The enzyme catalyses all-trans-retinol + NAD(+) = all-trans-retinal + NADH + H(+). It catalyses the reaction 3alpha-hydroxy-5alpha-pregnan-20-one + NAD(+) = 5alpha-pregnane-3,20-dione + NADH + H(+). Its function is as follows. 3-alpha-hydroxysteroid dehydrogenase that converts 3-alpha-tetrahydroprogesterone (allopregnanolone) to dihydroxyprogesterone and 3-alpha-androstanediol to dihydroxyprogesterone. Plays also role in the biosynthesis of retinoic acid from retinaldehyde. Can utilize both NADH and NADPH. The sequence is that of Dehydrogenase/reductase SDR family member 9 (Dhrs9) from Rattus norvegicus (Rat).